We begin with the raw amino-acid sequence, 248 residues long: PF03932 family protein CutC (248 aa).

The protein belongs to the CutC family. As to quaternary structure, homodimer.

The protein localises to the cytoplasm. The chain is PF03932 family protein CutC from Escherichia coli O17:K52:H18 (strain UMN026 / ExPEC).